The chain runs to 656 residues: Cyclic AMP-dependent transcription factor ATF-6 alpha (656 aa).

The interval 1-137 is transcription activation; that stretch reads MESPFSPVLP…SPSSAEPLKE (137 aa). K75 participates in a covalent cross-link: Glycyl lysine isopeptide (Lys-Gly) (interchain with G-Cter in SUMO2). Composition is skewed to low complexity over residues 81–101 and 111–121; these read LSPA…SCSS and LLSSSQSPLSL. The tract at residues 81 to 171 is disordered; that stretch reads LSPASSSCSV…SKPSVQPKPL (91 aa). K139 is covalently cross-linked (Glycyl lysine isopeptide (Lys-Gly) (interchain with G-Cter in ubiquitin)). A bZIP domain is found at 293 to 356; that stretch reads VLRRQQRMIK…DQVVSENQRL (64 aa). Positions 295–326 are basic motif; the sequence is RRQQRMIKNRESACQSRKKKKEYMLGLEARLK. The segment at 335–342 is leucine-zipper; it reads LKKENGSL. Residues 378 to 398 form a helical; Signal-anchor for type II membrane protein membrane-spanning segment; that stretch reads NYGPMSMLEQDSRRVKPSVSP. Topologically, residues 399–656 are lumenal; the sequence is ANQRRHLLEF…VVSTLPESVQ (258 aa). The tract at residues 455-575 is interaction with THBS4; the sequence is QPLINTTESL…ATTHNKTTRP (121 aa). N459, N570, and N629 each carry an N-linked (GlcNAc...) asparagine glycan. Residues 632–656 form a disordered region; sequence STFFGSPPTATETTHVVSTLPESVQ.

This sequence belongs to the bZIP family. ATF subfamily. In terms of assembly, interacts with XBP1 isoform 2; the interaction occurs in a ER stress-dependent manner. Interacts with LACC1. As to quaternary structure, interacts with THBS4 (via EGF-like 3; calcium-binding domain) which facilitates its processing, activation and nuclear translocation. Interacts (via lumenal domain) with THBS1. Homodimer and heterodimer with ATF6-beta. The dimer interacts with the nuclear transcription factor Y (NF-Y) trimer through direct binding to NF-Y subunit C (NF-YC). Also interacts with the transcription factors GTF2I, YY1 and SRF. During unfolded protein response, a fragment of approximately 50 kDa containing the cytoplasmic transcription factor domain is released by proteolysis. The cleavage seems to be performed sequentially by site-1 (MBTPS1, S1P) and site-2 (MBTPS2, S2P) proteases. Post-translationally, N-glycosylated; in its luminal domain. The glycosylation status may serve as a sensor for ER homeostasis, resulting in ATF6 activation to trigger the unfolded protein response (UPR). In terms of processing, ubiquitinated by RNF186 at Lys-139, which is required for pattern recognition receptor-induced unfolded protein response-associated outcomes.

The protein localises to the endoplasmic reticulum membrane. Its subcellular location is the golgi apparatus membrane. The protein resides in the nucleus. Precursor of the transcription factor form (Processed cyclic AMP-dependent transcription factor ATF-6 alpha), which is embedded in the endoplasmic reticulum membrane. Endoplasmic reticulum stress promotes processing of this form, releasing the transcription factor form that translocates into the nucleus, where it activates transcription of genes involved in the unfolded protein response (UPR). Its function is as follows. Transcription factor that initiates the unfolded protein response (UPR) during endoplasmic reticulum stress by activating transcription of genes involved in the UPR. Binds DNA on the 5'-CCAC[GA]-3'half of the ER stress response element (ERSE) (5'-CCAAT-N(9)-CCAC[GA]-3') and of ERSE II (5'-ATTGG-N-CCACG-3'). Binding to ERSE requires binding of NF-Y to ERSE. Could also be involved in activation of transcription by the serum response factor. May play a role in foveal development and cone function in the retina. The chain is Cyclic AMP-dependent transcription factor ATF-6 alpha (Atf6) from Rattus norvegicus (Rat).